We begin with the raw amino-acid sequence, 259 residues long: Aminoglycoside 3'-phosphotransferase (259 aa).

D187 serves as the catalytic Proton acceptor.

This sequence belongs to the aminoglycoside phosphotransferase family.

It catalyses the reaction kanamycin A + ATP = kanamycin 3'-phosphate + ADP + H(+). In terms of biological role, resistance to kanamycin and structurally-related aminoglycosides, including amikacin. The protein is Aminoglycoside 3'-phosphotransferase (aphA-6) of Acinetobacter baumannii.